Reading from the N-terminus, the 873-residue chain is DNA mismatch repair protein MutS (873 aa).

Positions 1 to 34 (MAAIPTPRLHRGVTHLSRQTKSRARHPMSTPQHT) are disordered. Over residues 8 to 26 (RLHRGVTHLSRQTKSRARH) the composition is skewed to basic residues. 635 to 642 (GPNMGGKS) lines the ATP pocket.

Belongs to the DNA mismatch repair MutS family.

This protein is involved in the repair of mismatches in DNA. It is possible that it carries out the mismatch recognition step. This protein has a weak ATPase activity. This Chromobacterium violaceum (strain ATCC 12472 / DSM 30191 / JCM 1249 / CCUG 213 / NBRC 12614 / NCIMB 9131 / NCTC 9757 / MK) protein is DNA mismatch repair protein MutS.